We begin with the raw amino-acid sequence, 418 residues long: Serine hydroxymethyltransferase (418 aa).

(6S)-5,6,7,8-tetrahydrofolate is bound by residues Leu-121 and 125 to 127 (GHL). Lys-230 carries the N6-(pyridoxal phosphate)lysine modification. 356–358 (SPF) is a binding site for (6S)-5,6,7,8-tetrahydrofolate.

The protein belongs to the SHMT family. In terms of assembly, homodimer. The cofactor is pyridoxal 5'-phosphate.

The protein localises to the cytoplasm. It carries out the reaction (6R)-5,10-methylene-5,6,7,8-tetrahydrofolate + glycine + H2O = (6S)-5,6,7,8-tetrahydrofolate + L-serine. It participates in one-carbon metabolism; tetrahydrofolate interconversion. It functions in the pathway amino-acid biosynthesis; glycine biosynthesis; glycine from L-serine: step 1/1. Catalyzes the reversible interconversion of serine and glycine with tetrahydrofolate (THF) serving as the one-carbon carrier. This reaction serves as the major source of one-carbon groups required for the biosynthesis of purines, thymidylate, methionine, and other important biomolecules. Also exhibits THF-independent aldolase activity toward beta-hydroxyamino acids, producing glycine and aldehydes, via a retro-aldol mechanism. The polypeptide is Serine hydroxymethyltransferase (Idiomarina loihiensis (strain ATCC BAA-735 / DSM 15497 / L2-TR)).